The primary structure comprises 333 residues: UPF0324 membrane protein WS2204 (333 aa).

The next 9 membrane-spanning stretches (helical) occupy residues 4 to 26 (SIRP…FGLA), 31 to 53 (FLSL…APWY), 59 to 81 (IGII…LFGF), 88 to 110 (LLGV…FTLG), 125 to 147 (SMLI…ESLS), 154 to 176 (TAIA…PLVY), 218 to 240 (VIVK…FTIL), 253 to 275 (PWFA…PSWL), and 310 to 332 (ALAL…VKLL).

The protein belongs to the UPF0324 family.

The protein localises to the cell membrane. The chain is UPF0324 membrane protein WS2204 from Wolinella succinogenes (strain ATCC 29543 / DSM 1740 / CCUG 13145 / JCM 31913 / LMG 7466 / NCTC 11488 / FDC 602W) (Vibrio succinogenes).